A 763-amino-acid chain; its full sequence is Phosphoglycerol transferase I (763 aa).

Transmembrane regions (helical) follow at residues 1-21 (MSEL…AWKA), 26-46 (WWFA…ITLF), 77-97 (ILPG…LGWI), and 108-128 (FGYS…SPAF).

This sequence belongs to the OpgB family.

The protein localises to the cell inner membrane. It catalyses the reaction a phosphatidylglycerol + a membrane-derived-oligosaccharide D-glucose = a 1,2-diacyl-sn-glycerol + a membrane-derived-oligosaccharide 6-(glycerophospho)-D-glucose.. It functions in the pathway glycan metabolism; osmoregulated periplasmic glucan (OPG) biosynthesis. Transfers a phosphoglycerol residue from phosphatidylglycerol to the membrane-bound nascent glucan backbones. In Escherichia coli (strain 55989 / EAEC), this protein is Phosphoglycerol transferase I.